The primary structure comprises 318 residues: Peroxisomal targeting signal 2 receptor (318 aa).

WD repeat units follow at residues 60-91 (DWND…QLWD), 104-136 (EHTQ…KVWD), 148-179 (GHES…RIWD), 191-222 (AHQT…RGWD), 235-266 (GHTY…RFWN), and 279-310 (HHTE…KIYD).

The protein belongs to the WD repeat peroxin-7 family. In terms of assembly, interacts with PEX5; interaction only takes place when PEX7 is associated with cargo proteins. Interacts with VWA8.

Its subcellular location is the cytoplasm. It localises to the cytosol. It is found in the peroxisome matrix. In terms of biological role, receptor required for the peroxisomal import of proteins containing a C-terminal PTS2-type peroxisomal targeting signal. Specifically binds to cargo proteins containing a PTS2 peroxisomal targeting signal in the cytosol. Cargo protein-binding triggers interaction with PEX5 and formation of a ternary complex composed of PEX5 and PEX7 along with PTS2-containing cargo proteins, which is tranlocated into peroxisomes by passing through the PEX13-PEX14 docking complex. The chain is Peroxisomal targeting signal 2 receptor from Mus musculus (Mouse).